Reading from the N-terminus, the 85-residue chain is MRTTVSISDEILAAAKRRARERGQSLGAVIEDALRREFAAAHVGGARPTVPVFDGGTGPRRGIDLTSNRALSEVLDEGLELNSRK.

Functionally, antitoxin component of a type II toxin-antitoxin (TA) system. Upon expression in M.smegmatis neutralizes the effect of cognate toxin VapC31. This is Antitoxin VapB31 (vapB31) from Mycobacterium tuberculosis (strain ATCC 25618 / H37Rv).